Reading from the N-terminus, the 617-residue chain is Pentatricopeptide repeat-containing protein At4g18520, chloroplastic (617 aa).

The N-terminal 19 residues, 1–19, are a transit peptide targeting the chloroplast; that stretch reads MFSLSLIQPRLRISEIPVT. PPR repeat units lie at residues 116–146, 147–181, 183–217, 222–247, 248–282, 283–317, 318–348, 349–383, 384–418, 419–449, 450–484, 485–519, 520–550, and 551–585; these read VIYFGNNLISSCVRLGDLVYARKVFDSMPEK, NTVTWTAMIDGYLKYGLEDEAFALFEDYVKHGIRF, NERMFVCLLNLCSRRAEFELGRQVHGNMVKVGVGN, SSLVYFYAQCGELTSALRAFDMMEEK, DVISWTAVISACSRKGHGIKAIGMFIGMLNHWFLP, NEFTVCSILKACSEEKALRFGRQVHSLVVKRMIKT, DVFVGTSLMDMYAKCGEISDCRKVFDGMSNR, NTVTWTSIIAAHAREGFGEEAISLFRIMKRRHLIA, NNLTVVSILRACGSVGALLLGKELHAQIIKNSIEK, NVYIGSTLVWLYCKCGESRDAFNVLQQLPSR, DVVSWTAMISGCSSLGHESEALDFLKEMIQEGVEP, NPFTYSSALKACANSESLLIGRSIHSIAKKNHALS, NVFVGSALIHMYAKCGFVSEAFRVFDSMPEK, and NLVSWKAMIMGYARNGFCREALKLMYRMEAEGFEV.

This sequence belongs to the PPR family. PCMP-A subfamily. As to quaternary structure, interacts with MORF8/RIP1, MORF2/RIP2 and MORF9/RIP9. As to expression, expressed specifically in aerial greening tissues, such as cotyledons, rosette leaves, cauline leaves, stems, sepals, stamens, carpels and siliques.

The protein localises to the plastid. It is found in the chloroplast. Its function is as follows. Required for proper chloroplast development. Involved in the regulation of plastid gene expression probably through regulation of plastid-encoded polymerase (PEP) dependent chloroplast transcription. Required for RNA editing of several chloroplastic transcripts, especially accD transcripts. Required for processing of the chloroplastic rpoA pre-mRNA. Required for the monocistronic rpoA transcript processing from the rpl23-rpl2-rps19-rpl22-rps3-rpl16-rpl14-rps8-rpl36-rps11-rpoA polycistron. Binds the intergenic sequence of rps11-rpoA for rpoA monocistronic RNA cleavage. The polypeptide is Pentatricopeptide repeat-containing protein At4g18520, chloroplastic (PCMP-A2) (Arabidopsis thaliana (Mouse-ear cress)).